The following is a 307-amino-acid chain: Methionyl-tRNA formyltransferase (307 aa).

110-113 lines the (6S)-5,6,7,8-tetrahydrofolate pocket; it reads SLLP.

This sequence belongs to the Fmt family.

The enzyme catalyses L-methionyl-tRNA(fMet) + (6R)-10-formyltetrahydrofolate = N-formyl-L-methionyl-tRNA(fMet) + (6S)-5,6,7,8-tetrahydrofolate + H(+). In terms of biological role, attaches a formyl group to the free amino group of methionyl-tRNA(fMet). The formyl group appears to play a dual role in the initiator identity of N-formylmethionyl-tRNA by promoting its recognition by IF2 and preventing the misappropriation of this tRNA by the elongation apparatus. The chain is Methionyl-tRNA formyltransferase from Rhodococcus erythropolis (strain PR4 / NBRC 100887).